The primary structure comprises 261 residues: uncharacterized protein (261 aa).

Residues 16 to 147 (KQTSLVLQNL…QTNVNVLRSQ (132 aa)) are a coiled coil.

It localises to the cytoplasm. This is an uncharacterized protein from Schizosaccharomyces pombe (strain 972 / ATCC 24843) (Fission yeast).